A 54-amino-acid chain; its full sequence is Toxin AnmTx Cj 1c-1 (54 aa).

The N-terminal stretch at 1–7 (MLNKRGV) is a signal peptide. 3 disulfides stabilise this stretch: C9-C50, C11-C41, and C33-C51. A Glutamic acid 1-amide modification is found at E53.

Belongs to the sea anemone sodium channel inhibitory toxin family. Type I subfamily. Contains 3 disulfide bonds.

Its subcellular location is the secreted. The protein resides in the nematocyst. In terms of biological role, in vivo, induces marked paralysis on shrimps (C.multidentata) at 10-20 seconds after injection and a weak toxicity when injected into insect larvae (M.domestica). The protein is Toxin AnmTx Cj 1c-1 of Epiactis japonica (Sea anemone).